The primary structure comprises 423 residues: Serine--tRNA ligase (423 aa).

231 to 233 is an L-serine binding site; it reads TAE. 262-264 contributes to the ATP binding site; sequence RSE. Residue Glu285 participates in L-serine binding. Position 349 to 352 (349 to 352) interacts with ATP; the sequence is EISS. Ser384 contributes to the L-serine binding site.

Belongs to the class-II aminoacyl-tRNA synthetase family. Type-1 seryl-tRNA synthetase subfamily. As to quaternary structure, homodimer. The tRNA molecule binds across the dimer.

It is found in the cytoplasm. The enzyme catalyses tRNA(Ser) + L-serine + ATP = L-seryl-tRNA(Ser) + AMP + diphosphate + H(+). It carries out the reaction tRNA(Sec) + L-serine + ATP = L-seryl-tRNA(Sec) + AMP + diphosphate + H(+). It functions in the pathway aminoacyl-tRNA biosynthesis; selenocysteinyl-tRNA(Sec) biosynthesis; L-seryl-tRNA(Sec) from L-serine and tRNA(Sec): step 1/1. Catalyzes the attachment of serine to tRNA(Ser). Is also able to aminoacylate tRNA(Sec) with serine, to form the misacylated tRNA L-seryl-tRNA(Sec), which will be further converted into selenocysteinyl-tRNA(Sec). The chain is Serine--tRNA ligase from Lactococcus lactis subsp. cremoris (strain SK11).